A 395-amino-acid polypeptide reads, in one-letter code: Elongation factor Tu (395 aa).

The tr-type G domain maps to 10–205; the sequence is KPHVNIGTIG…VDNWIPIPPR (196 aa). Residues 19–26 are G1; sequence GHVDHGKT. 19 to 26 serves as a coordination point for GTP; sequence GHVDHGKT. Threonine 26 is a Mg(2+) binding site. Residues 60-64 form a G2 region; sequence GITIN. The tract at residues 81–84 is G3; sequence DCPG. Residues 81 to 85 and 136 to 139 contribute to the GTP site; these read DCPGH and NKVD. The tract at residues 136 to 139 is G4; sequence NKVD. The segment at 174–176 is G5; it reads SAL.

This sequence belongs to the TRAFAC class translation factor GTPase superfamily. Classic translation factor GTPase family. EF-Tu/EF-1A subfamily. In terms of assembly, monomer.

It is found in the cytoplasm. The catalysed reaction is GTP + H2O = GDP + phosphate + H(+). Its function is as follows. GTP hydrolase that promotes the GTP-dependent binding of aminoacyl-tRNA to the A-site of ribosomes during protein biosynthesis. The protein is Elongation factor Tu of Hymenobacter ocellatus (Parahymenobacter ocellatus).